Reading from the N-terminus, the 855-residue chain is Serine/threonine-protein kinase HAL5 (855 aa).

Disordered regions lie at residues 1–166 and 214–261; these read MGDE…VERQ and RRNS…GNGT. Phosphoserine occurs at positions 17 and 19. Positions 31 to 45 are enriched in polar residues; the sequence is ISGSNNAAAPSSRPG. A compositionally biased stretch (low complexity) spans 57 to 74; the sequence is IITSNVSSPSISPVHSPV. Residues Ser-68 and Ser-72 each carry the phosphoserine modification. The segment covering 94-114 has biased composition (polar residues); that stretch reads LSPSREPSLNSENEMFSQESF. Residues 125–139 are compositionally biased toward basic and acidic residues; the sequence is LLEREDLQNKKEEKA. Ser-160 is modified (phosphoserine). Positions 248-258 are enriched in low complexity; it reads GMNSNATNNVG. Phosphoserine is present on residues Ser-273, Ser-277, Ser-324, Ser-333, Ser-336, Ser-358, Ser-391, and Ser-395. Residues 319-347 are disordered; it reads NKNVDSGDEKDADASVNSGDDGDNDSEAN. Disordered stretches follow at residues 401–427 and 457–497; these read SQTV…DGKN and LKSE…SHKP. Polar residues predominate over residues 462–474; the sequence is TKGNNGEGRSNSN. The Protein kinase domain maps to 503 to 837; the sequence is GKYIGVVGAG…IEQLLQSSWM (335 aa). ATP-binding positions include 509–517 and Lys-546; that span reads VGAGAYGVV. Asp-688 serves as the catalytic Proton acceptor.

This sequence belongs to the protein kinase superfamily. CAMK Ser/Thr protein kinase family. NPR/HAL subfamily. HAL5 sub-subfamily.

It catalyses the reaction L-seryl-[protein] + ATP = O-phospho-L-seryl-[protein] + ADP + H(+). The enzyme catalyses L-threonyl-[protein] + ATP = O-phospho-L-threonyl-[protein] + ADP + H(+). In terms of biological role, protein kinase involved in salt tolerance and pH sensitivity, probably by regulating plasma membrane potential and cation influx. Positively controls the TRK1-TRK2 potassium transport system in response to potassium starvation. Stabilizes TRK1 in the plasma membrane by preventing its vacuolar sorting and degradation. Also stabilizes other plasma membrane nutrient transporters like CAN1, FUR4 and HXT1. May itself be subject to regulation by ARL1. In Saccharomyces cerevisiae (strain YJM789) (Baker's yeast), this protein is Serine/threonine-protein kinase HAL5 (HAL5).